The primary structure comprises 329 residues: GMP reductase (329 aa).

Cys178 functions as the Thioimidate intermediate in the catalytic mechanism. 207 to 230 provides a ligand contact to NADP(+); sequence IIADGGIRNNGDIAKSIRFGATMC.

This sequence belongs to the IMPDH/GMPR family. GuaC type 2 subfamily.

It catalyses the reaction IMP + NH4(+) + NADP(+) = GMP + NADPH + 2 H(+). Functionally, catalyzes the irreversible NADPH-dependent deamination of GMP to IMP. It functions in the conversion of nucleobase, nucleoside and nucleotide derivatives of G to A nucleotides, and in maintaining the intracellular balance of A and G nucleotides. The chain is GMP reductase from Lacticaseibacillus paracasei (strain ATCC 334 / BCRC 17002 / CCUG 31169 / CIP 107868 / KCTC 3260 / NRRL B-441) (Lactobacillus paracasei).